Reading from the N-terminus, the 36-residue chain is Cytochrome b6-f complex subunit 5 (36 aa).

Residues 5–25 (LLSGIVLGLIPITILGLLMAA) traverse the membrane as a helical segment.

Belongs to the PetG family. In terms of assembly, the 4 large subunits of the cytochrome b6-f complex are cytochrome b6, subunit IV (17 kDa polypeptide, PetD), cytochrome f and the Rieske protein, while the 4 small subunits are PetG, PetL, PetM and PetN. The complex functions as a dimer.

It localises to the plastid. The protein resides in the chloroplast thylakoid membrane. Component of the cytochrome b6-f complex, which mediates electron transfer between photosystem II (PSII) and photosystem I (PSI), cyclic electron flow around PSI, and state transitions. PetG is required for either the stability or assembly of the cytochrome b6-f complex. The sequence is that of Cytochrome b6-f complex subunit 5 from Cyanidioschyzon merolae (strain NIES-3377 / 10D) (Unicellular red alga).